The primary structure comprises 1076 residues: Serine/threonine-protein phosphatase 6 regulatory ankyrin repeat subunit C (1076 aa).

28 ANK repeats span residues 7-36, 40-69, 73-102, 106-135, 139-168, 172-201, 205-234, 238-267, 271-301, 305-334, 338-367, 371-400, 422-451, 455-484, 488-545, 549-579, 584-613, 617-646, 651-680, 687-716, 720-749, 753-782, 790-819, 822-852, 857-886, 890-920, 924-953, and 960-989; these read TDQP…NINV, ERRT…NVNA, LWLT…DVNA, LWQT…SLNV, SGRS…SLNV, KERQ…DLGC, KGYG…EIDE, FGNT…NVNQ, KGFT…DVNY, EGKS…EIDC, FGNT…DTAR, HDMF…LYSI, LGRT…DLRR, FGRT…GVNE, KGCS…DPSL, QGYT…CLED, IPVS…NLDV, KGRT…SALI, RKWT…RADI, YGQT…TADA, RGRT…FVLC, KGRT…STDP, SGYS…FSYL, NPFT…KIVN, KGRT…EVNA, TGRT…DLTV, NKNT…DLGL, and ALQM…TVLA. A compositionally biased stretch (basic and acidic residues) spans 502–514; sequence YRRAEPHTPSSHD. The segment at 502-522 is disordered; sequence YRRAEPHTPSSHDAEEDEPLK. Phosphoserine is present on residues serine 1028 and serine 1075.

In terms of assembly, protein phosphatase 6 (PP6) holoenzyme is proposed to be a heterotrimeric complex formed by the catalytic subunit, a SAPS domain-containing subunit (PP6R) and an ankyrin repeat-domain containing regulatory subunit (ARS). Interacts with PPP6R1.

Putative regulatory subunit of protein phosphatase 6 (PP6) that may be involved in the recognition of phosphoprotein substrates. This is Serine/threonine-protein phosphatase 6 regulatory ankyrin repeat subunit C (ANKRD52) from Homo sapiens (Human).